The sequence spans 541 residues: Chaperonin GroEL 2 (541 aa).

Residues 29–32 (TLGP), 86–90 (DGTTT), glycine 413, 478–480 (NAA), and aspartate 494 each bind ATP.

It belongs to the chaperonin (HSP60) family. Forms a cylinder of 14 subunits composed of two heptameric rings stacked back-to-back. Interacts with the co-chaperonin GroES.

Its subcellular location is the cytoplasm. It carries out the reaction ATP + H2O + a folded polypeptide = ADP + phosphate + an unfolded polypeptide.. Functionally, together with its co-chaperonin GroES, plays an essential role in assisting protein folding. The GroEL-GroES system forms a nano-cage that allows encapsulation of the non-native substrate proteins and provides a physical environment optimized to promote and accelerate protein folding. In Corynebacterium jeikeium (strain K411), this protein is Chaperonin GroEL 2.